The sequence spans 481 residues: Ribosomal RNA small subunit methyltransferase F (481 aa).

Residues 125-131 (AAAPGSK), Glu149, Asp176, and Asp194 contribute to the S-adenosyl-L-methionine site. The active-site Nucleophile is Cys247.

The protein belongs to the class I-like SAM-binding methyltransferase superfamily. RsmB/NOP family.

The protein localises to the cytoplasm. The enzyme catalyses cytidine(1407) in 16S rRNA + S-adenosyl-L-methionine = 5-methylcytidine(1407) in 16S rRNA + S-adenosyl-L-homocysteine + H(+). Specifically methylates the cytosine at position 1407 (m5C1407) of 16S rRNA. The protein is Ribosomal RNA small subunit methyltransferase F of Psychromonas ingrahamii (strain DSM 17664 / CCUG 51855 / 37).